The chain runs to 570 residues: Sulfite reductase [NADPH] hemoprotein beta-component (570 aa).

Positions 434, 440, 479, and 483 each coordinate [4Fe-4S] cluster. Cysteine 483 is a siroheme binding site.

The protein belongs to the nitrite and sulfite reductase 4Fe-4S domain family. As to quaternary structure, alpha(8)-beta(8). The alpha component is a flavoprotein, the beta component is a hemoprotein. It depends on siroheme as a cofactor. [4Fe-4S] cluster is required as a cofactor.

The enzyme catalyses hydrogen sulfide + 3 NADP(+) + 3 H2O = sulfite + 3 NADPH + 4 H(+). It functions in the pathway sulfur metabolism; hydrogen sulfide biosynthesis; hydrogen sulfide from sulfite (NADPH route): step 1/1. Component of the sulfite reductase complex that catalyzes the 6-electron reduction of sulfite to sulfide. This is one of several activities required for the biosynthesis of L-cysteine from sulfate. In Cronobacter sakazakii (strain ATCC BAA-894) (Enterobacter sakazakii), this protein is Sulfite reductase [NADPH] hemoprotein beta-component.